Consider the following 1083-residue polypeptide: Voltage-gated inwardly rectifying potassium channel KCNH3 (1083 aa).

Over 1 to 228 the chain is Cytoplasmic; it reads MPAMRGLLAP…HCGALRATWD (228 aa). The region spanning 18–90 is the PAS domain; that stretch reads IATRFDGTHS…QQIRKALDEH (73 aa). The 53-residue stretch at 93–145 folds into the PAC domain; sequence FKAELILYRKSGLPFWCLLDVIPIKNEKGEVALFLVSHKDISETKNRGGPDRW. Positions 137-150 are enriched in basic and acidic residues; sequence KNRGGPDRWKETGG. The disordered stretch occupies residues 137–157; the sequence is KNRGGPDRWKETGGGRRRYGR. A helical membrane pass occupies residues 229 to 249; sequence GFILLATLYVAVTVPYSVCVS. At 250–259 the chain is on the extracellular side; that stretch reads TAREPSAARG. Residues 260-280 form a helical membrane-spanning segment; that stretch reads PPSVCDLAVEVLFILDIVLNF. The Cytoplasmic segment spans residues 281–302; that stretch reads RTTFVSKSGQVVFAPKSICLHY. Residues 303–323 form a helical membrane-spanning segment; it reads VTTWFLLDVIAALPFDLLHAF. Residues 324–331 lie on the Extracellular side of the membrane; it reads KVNVYFGA. A helical; Voltage-sensor membrane pass occupies residues 332 to 352; sequence HLLKTVRLLRLLRLLPRLDRY. At 353-361 the chain is on the cytoplasmic side; it reads SQYSAVVLT. The chain crosses the membrane as a helical span at residues 362 to 382; that stretch reads LLMAVFALLAHWVACVWFYIG. Residues 383–453 are Extracellular-facing; that stretch reads QREIESSESE…GGPSLRSAYI (71 aa). Residues N421, N428, and N436 are each glycosylated (N-linked (GlcNAc...) asparagine). The pore-forming intramembrane region spans 454-474; it reads TSLYFALSSLTSVGFGNVSAN. A Selectivity filter motif is present at residues 465 to 470; the sequence is SVGFGN. Over 475-479 the chain is Extracellular; the sequence is TDTEK. Residues 480–500 traverse the membrane as a helical segment; it reads IFSICTMLIGALMHAVVFGNV. Residues 501-1083 lie on the Cytoplasmic side of the membrane; that stretch reads TAIIQRMYAR…QWTQEEGTGV (583 aa). 582–697 is a binding site for a nucleoside 3',5'-cyclic phosphate; it reads LFEAASRGCL…FAPRFSRGLR (116 aa). Disordered stretches follow at residues 729 to 810, 832 to 873, and 972 to 1055; these read EEKE…LRLP, CGSD…SEAR, and MAPW…ALPW. Basic residues predominate over residues 773–785; sequence TAPRPRLGGRGRP. The segment covering 844–861 has biased composition (low complexity); it reads GQSGPECSSSPSPGPESG.

It belongs to the potassium channel family. H (Eag) (TC 1.A.1.20) subfamily. Kv12.2/KCNH3 sub-subfamily. In terms of assembly, the potassium channel is probably composed of a homo- or heterotetrameric complex of pore-forming alpha subunits that can associate with modulating beta subunits. Interacts with KCNE1 and KCNE3; these interactions regulate KCNH3 trafficking to the plasma membrane and its subsequent voltage-gated potassium channel activity. In terms of processing, N-glycosylated. N-glycosylation mediates traffick to the cell membrane but is not necessary for voltage-gated potassium channel activity. As to expression, detected only in brain, in particular in the telencephalon. Detected in the cerebral cortex, occipital pole, frontal and temporal lobe, putamen, amygdala, hippocampus and caudate nucleus.

It localises to the cell membrane. It carries out the reaction K(+)(in) = K(+)(out). Pore-forming (alpha) subunit of a voltage-gated inwardly rectifying potassium channel. Charactherized by a fast rate of activation during depolarization followed by a rapid inactivation at much more depolarized value causing inward rectification due to a C-type inactivation mechanism. Exhibits a rapid recovery from inactivation. The chain is Voltage-gated inwardly rectifying potassium channel KCNH3 from Homo sapiens (Human).